A 259-amino-acid chain; its full sequence is Small ribosomal subunit protein uS2 (259 aa).

It belongs to the universal ribosomal protein uS2 family.

This Streptococcus pneumoniae serotype 2 (strain D39 / NCTC 7466) protein is Small ribosomal subunit protein uS2.